Here is a 406-residue protein sequence, read N- to C-terminus: Phosphopentomutase (406 aa).

Mn(2+) contacts are provided by D10, D305, H310, D346, H347, and H358.

Belongs to the phosphopentomutase family. Requires Mn(2+) as cofactor.

The protein resides in the cytoplasm. It catalyses the reaction 2-deoxy-alpha-D-ribose 1-phosphate = 2-deoxy-D-ribose 5-phosphate. The catalysed reaction is alpha-D-ribose 1-phosphate = D-ribose 5-phosphate. It participates in carbohydrate degradation; 2-deoxy-D-ribose 1-phosphate degradation; D-glyceraldehyde 3-phosphate and acetaldehyde from 2-deoxy-alpha-D-ribose 1-phosphate: step 1/2. In terms of biological role, isomerase that catalyzes the conversion of deoxy-ribose 1-phosphate (dRib-1-P) and ribose 1-phosphate (Rib-1-P) to deoxy-ribose 5-phosphate (dRib-5-P) and ribose 5-phosphate (Rib-5-P), respectively. The sequence is that of Phosphopentomutase from Vibrio cholerae serotype O1 (strain ATCC 39541 / Classical Ogawa 395 / O395).